The primary structure comprises 164 residues: Protein SprT (164 aa).

Residues Gln-14–Val-156 enclose the SprT-like domain. His-69 lines the Zn(2+) pocket. Glu-70 is a catalytic residue. His-73 is a binding site for Zn(2+).

Belongs to the SprT family. Zn(2+) serves as cofactor.

The protein resides in the cytoplasm. The polypeptide is Protein SprT (Pseudomonas fluorescens (strain Pf0-1)).